Consider the following 150-residue polypeptide: UPF0178 protein Reut_B5138 (150 aa).

Belongs to the UPF0178 family.

This Cupriavidus pinatubonensis (strain JMP 134 / LMG 1197) (Cupriavidus necator (strain JMP 134)) protein is UPF0178 protein Reut_B5138.